We begin with the raw amino-acid sequence, 316 residues long: D-alanine--D-alanine ligase (316 aa).

Residues 109–304 (KRLWRGMDLP…FDEMVLQILA (196 aa)) form the ATP-grasp domain. An ATP-binding site is contributed by 135 to 190 (AADLGLPLIVKPAREGSSLGMMKVESIEALQSAYREAVIFDTAVFAERWLPGAEYT). Mg(2+) contacts are provided by Asp-258, Glu-271, and Asn-273.

Belongs to the D-alanine--D-alanine ligase family. It depends on Mg(2+) as a cofactor. Mn(2+) serves as cofactor.

Its subcellular location is the cytoplasm. The enzyme catalyses 2 D-alanine + ATP = D-alanyl-D-alanine + ADP + phosphate + H(+). It functions in the pathway cell wall biogenesis; peptidoglycan biosynthesis. Its function is as follows. Cell wall formation. This chain is D-alanine--D-alanine ligase, found in Nitrosococcus oceani (strain ATCC 19707 / BCRC 17464 / JCM 30415 / NCIMB 11848 / C-107).